We begin with the raw amino-acid sequence, 320 residues long: tRNA-cytidine(32) 2-sulfurtransferase (320 aa).

The short motif at serine 54–serine 59 is the PP-loop motif element. Positions 129, 132, and 220 each coordinate [4Fe-4S] cluster.

The protein belongs to the TtcA family. In terms of assembly, homodimer. Mg(2+) serves as cofactor. Requires [4Fe-4S] cluster as cofactor.

It is found in the cytoplasm. It carries out the reaction cytidine(32) in tRNA + S-sulfanyl-L-cysteinyl-[cysteine desulfurase] + AH2 + ATP = 2-thiocytidine(32) in tRNA + L-cysteinyl-[cysteine desulfurase] + A + AMP + diphosphate + H(+). The protein operates within tRNA modification. Catalyzes the ATP-dependent 2-thiolation of cytidine in position 32 of tRNA, to form 2-thiocytidine (s(2)C32). The sulfur atoms are provided by the cysteine/cysteine desulfurase (IscS) system. This chain is tRNA-cytidine(32) 2-sulfurtransferase, found in Bordetella parapertussis (strain 12822 / ATCC BAA-587 / NCTC 13253).